The chain runs to 304 residues: Large ribosomal subunit protein uL2 (304 aa).

The tract at residues 246 to 282 (HTRGTAMNPVDHPHGGGEGRTRGKHPESPWGWKTKGY) is disordered. Over residues 256 to 272 (DHPHGGGEGRTRGKHPE) the composition is skewed to basic and acidic residues.

Belongs to the universal ribosomal protein uL2 family. In terms of assembly, part of the 50S ribosomal subunit. Forms a bridge to the 30S subunit in the 70S ribosome.

In terms of biological role, one of the primary rRNA binding proteins. Required for association of the 30S and 50S subunits to form the 70S ribosome, for tRNA binding and peptide bond formation. It has been suggested to have peptidyltransferase activity; this is somewhat controversial. Makes several contacts with the 16S rRNA in the 70S ribosome. In Aquifex aeolicus (strain VF5), this protein is Large ribosomal subunit protein uL2.